The sequence spans 347 residues: tRNA N6-adenosine threonylcarbamoyltransferase (347 aa).

Residues His115 and His119 each contribute to the Fe cation site. Residues 138 to 142, Asp171, Gly184, and Asn277 contribute to the substrate site; that span reads LVSGG. Asp305 serves as a coordination point for Fe cation.

Belongs to the KAE1 / TsaD family. The cofactor is Fe(2+).

The protein resides in the cytoplasm. The catalysed reaction is L-threonylcarbamoyladenylate + adenosine(37) in tRNA = N(6)-L-threonylcarbamoyladenosine(37) in tRNA + AMP + H(+). In terms of biological role, required for the formation of a threonylcarbamoyl group on adenosine at position 37 (t(6)A37) in tRNAs that read codons beginning with adenine. Is involved in the transfer of the threonylcarbamoyl moiety of threonylcarbamoyl-AMP (TC-AMP) to the N6 group of A37, together with TsaE and TsaB. TsaD likely plays a direct catalytic role in this reaction. This chain is tRNA N6-adenosine threonylcarbamoyltransferase, found in Polaromonas sp. (strain JS666 / ATCC BAA-500).